The chain runs to 205 residues: MSKRESAKYKIDRRMGENIWGRPKSPVNRREYGPGQHGQRRKGKMSDFGTQLRAKQKLKGYYGELREKQFRATFDEANRRKGDTSENLISLLESRLDAIVYRAKFVPTVFASRQFINHGHVTVNGVRVNIGSYRCKAGDVIEVRQKSKQLVTVLEAVQLAERDVPDYIEVDHNKMVATYARVPSLSDVPYPVVMEPHLVVEFYSR.

Positions 14–49 (RMGENIWGRPKSPVNRREYGPGQHGQRRKGKMSDFG) are disordered. Positions 94–157 (SRLDAIVYRA…KQLVTVLEAV (64 aa)) constitute an S4 RNA-binding domain.

It belongs to the universal ribosomal protein uS4 family. Part of the 30S ribosomal subunit. Contacts protein S5. The interaction surface between S4 and S5 is involved in control of translational fidelity.

One of the primary rRNA binding proteins, it binds directly to 16S rRNA where it nucleates assembly of the body of the 30S subunit. In terms of biological role, with S5 and S12 plays an important role in translational accuracy. The sequence is that of Small ribosomal subunit protein uS4 from Agrobacterium fabrum (strain C58 / ATCC 33970) (Agrobacterium tumefaciens (strain C58)).